Reading from the N-terminus, the 212-residue chain is tRNA (guanine-N(7)-)-methyltransferase (212 aa).

Residues Glu-44, Asp-69, Asp-96, and Asp-118 each coordinate S-adenosyl-L-methionine. Asp-118 is an active-site residue. Residue Lys-122 coordinates substrate. The interaction with RNA stretch occupies residues 124–129 (RHEKRR). Residues Asp-154 and 191-194 (TEYE) contribute to the substrate site.

Belongs to the class I-like SAM-binding methyltransferase superfamily. TrmB family.

The catalysed reaction is guanosine(46) in tRNA + S-adenosyl-L-methionine = N(7)-methylguanosine(46) in tRNA + S-adenosyl-L-homocysteine. It functions in the pathway tRNA modification; N(7)-methylguanine-tRNA biosynthesis. Catalyzes the formation of N(7)-methylguanine at position 46 (m7G46) in tRNA. This chain is tRNA (guanine-N(7)-)-methyltransferase, found in Streptococcus suis (strain 05ZYH33).